Here is a 254-residue protein sequence, read N- to C-terminus: Major prion protein (254 aa).

The N-terminal stretch at 1 to 22 is a signal peptide; the sequence is MANLSYWLLALFVATWTDVGLC. Residues 23–231 form an interaction with GRB2, ERI3 and SYN1 region; sequence KKRPKPGGWN…SQAYYDGRRS (209 aa). The disordered stretch occupies residues 25–104; that stretch reads RPKPGGWNTG…THNQWNKPSK (80 aa). 5 repeat units span residues 51–59, 60–67, 68–75, 76–83, and 84–91. The tract at residues 51-91 is 5 X 8 AA tandem repeats of P-H-G-G-G-W-G-Q; sequence PQGGGTWGQPHGGGWGQPHGGGWGQPHGGGWGQPHGGGWGQ. Residues 52 to 95 are compositionally biased toward gly residues; it reads QGGGTWGQPHGGGWGQPHGGGWGQPHGGGWGQPHGGGWGQGGGT. Residues H61, G62, G63, H69, G70, G71, H77, G78, G79, H85, G86, and G87 each coordinate Cu(2+). The tract at residues 90–231 is prP27-30 (protease resistant core); it reads GQGGGTHNQW…SQAYYDGRRS (142 aa). C179 and C214 are joined by a disulfide. N-linked (GlcNAc...) asparagine glycosylation is found at N181 and N197. The GPI-anchor amidated serine moiety is linked to residue S231. A propeptide spans 232 to 254 (removed in mature form); sequence SAVLFSSPPVILLISFLIFLIVG.

Belongs to the prion family. As to quaternary structure, monomer and homodimer. Has a tendency to aggregate into amyloid fibrils containing a cross-beta spine, formed by a steric zipper of superposed beta-strands. Soluble oligomers may represent an intermediate stage on the path to fibril formation. Copper binding may promote oligomerization. Interacts with GRB2, APP, ERI3/PRNPIP and SYN1. Mislocalized cytosolically exposed PrP interacts with MGRN1; this interaction alters MGRN1 subcellular location and causes lysosomal enlargement. Interacts with KIAA1191.

Its subcellular location is the cell membrane. The protein resides in the golgi apparatus. Its primary physiological function is unclear. Has cytoprotective activity against internal or environmental stresses. May play a role in neuronal development and synaptic plasticity. May be required for neuronal myelin sheath maintenance. May play a role in iron uptake and iron homeostasis. Soluble oligomers are toxic to cultured neuroblastoma cells and induce apoptosis (in vitro). Association with GPC1 (via its heparan sulfate chains) targets PRNP to lipid rafts. Also provides Cu(2+) or Zn(2+) for the ascorbate-mediated GPC1 deaminase degradation of its heparan sulfate side chains. The protein is Major prion protein (PRNP) of Cricetulus griseus (Chinese hamster).